A 197-amino-acid chain; its full sequence is Inner membrane-spanning protein YciB (197 aa).

5 helical membrane passes run 22–42, 48–68, 76–96, 121–141, and 144–164; these read IYSATAALIIMVLLNVFYHWF, PSMMWITLILVMLFGGATLIF, WKPSILQWVLASGFLASHLIG, AAWVLFLLFSGALNLYVAYTF, and EIWVSFKLFGLMGLTILFLIG.

Belongs to the YciB family.

It is found in the cell inner membrane. Plays a role in cell envelope biogenesis, maintenance of cell envelope integrity and membrane homeostasis. In Magnetococcus marinus (strain ATCC BAA-1437 / JCM 17883 / MC-1), this protein is Inner membrane-spanning protein YciB.